The following is a 320-amino-acid chain: MHTKNLFYSRTQQITQYLSALLMMVILTRTSISSAYPLFAQQGYENPREATGRIVCANCHLANKPVNIEVPQAILPDTVFEAVVQIPYDLQLKQVLSNGKKGGLNVGAVLILPEGFELAPPDRISPELKEKIGNLYFQSYRPNIKNIFVVGPVPGQKYTKITFPILSPNPANNRRAHFLKYPIYVGGNRGRGQIYPDGSKSNNTVFNATASGRVKKIIRNQKGGYEIIINDGSDSNEVVNLLPPGLEPLVSEGESIKLDQPLTSNPNVGGFGQDVAEVVLQDPSRVQVLLFFFASIILAQIFLVLKKKQFEKVQLTKINL.

The first 35 residues, 1–35 (MHTKNLFYSRTQQITQYLSALLMMVILTRTSISSA), serve as a signal peptide directing secretion. Tyr-36, Cys-56, Cys-59, and His-60 together coordinate heme. The helical transmembrane segment at 286–306 (VQVLLFFFASIILAQIFLVLK) threads the bilayer.

Belongs to the cytochrome f family. The 4 large subunits of the cytochrome b6-f complex are cytochrome b6, subunit IV (17 kDa polypeptide, petD), cytochrome f and the Rieske protein, while the 4 small subunits are PetG, PetL, PetM and PetN. The complex functions as a dimer. Heme serves as cofactor.

It localises to the plastid thylakoid membrane. Its function is as follows. Component of the cytochrome b6-f complex, which mediates electron transfer between photosystem II (PSII) and photosystem I (PSI), cyclic electron flow around PSI, and state transitions. The protein is Cytochrome f of Cuscuta gronovii (Common dodder).